We begin with the raw amino-acid sequence, 374 residues long: Bifunctional enzyme IspD/IspF (374 aa).

A 2-C-methyl-D-erythritol 4-phosphate cytidylyltransferase region spans residues 1 to 213; it reads MLDVTLIVLC…PCLKAPSNNF (213 aa). A 2-C-methyl-D-erythritol 2,4-cyclodiphosphate synthase region spans residues 214-374; it reads FTGTGFDIHA…TLKYYNWKKR (161 aa). A divalent metal cation-binding residues include Asp220 and His222. Residues 220 to 222 and 246 to 247 each bind 4-CDP-2-C-methyl-D-erythritol 2-phosphate; these read DIH and HS. Position 254 (His254) interacts with a divalent metal cation. 4-CDP-2-C-methyl-D-erythritol 2-phosphate-binding positions include 268 to 270, 273 to 277, 344 to 347, Phe351, and Arg354; these read DIG, FPDTD, and TTAE.

This sequence in the N-terminal section; belongs to the IspD/TarI cytidylyltransferase family. IspD subfamily. In the C-terminal section; belongs to the IspF family. A divalent metal cation serves as cofactor.

The catalysed reaction is 2-C-methyl-D-erythritol 4-phosphate + CTP + H(+) = 4-CDP-2-C-methyl-D-erythritol + diphosphate. It catalyses the reaction 4-CDP-2-C-methyl-D-erythritol 2-phosphate = 2-C-methyl-D-erythritol 2,4-cyclic diphosphate + CMP. Its pathway is isoprenoid biosynthesis; isopentenyl diphosphate biosynthesis via DXP pathway; isopentenyl diphosphate from 1-deoxy-D-xylulose 5-phosphate: step 2/6. It functions in the pathway isoprenoid biosynthesis; isopentenyl diphosphate biosynthesis via DXP pathway; isopentenyl diphosphate from 1-deoxy-D-xylulose 5-phosphate: step 4/6. Functionally, bifunctional enzyme that catalyzes the formation of 4-diphosphocytidyl-2-C-methyl-D-erythritol from CTP and 2-C-methyl-D-erythritol 4-phosphate (MEP) (IspD), and catalyzes the conversion of 4-diphosphocytidyl-2-C-methyl-D-erythritol 2-phosphate (CDP-ME2P) to 2-C-methyl-D-erythritol 2,4-cyclodiphosphate (ME-CPP) with a corresponding release of cytidine 5-monophosphate (CMP) (IspF). The chain is Bifunctional enzyme IspD/IspF from Aliarcobacter butzleri (strain RM4018) (Arcobacter butzleri).